A 511-amino-acid chain; its full sequence is uncharacterized protein (511 aa).

The LisH domain occupies 13–45 (IYDALNMLVYDYLLKMKYEGSAKIFFNEAGLEN). Positions 172–212 (PRFEEQGVPPAKMAPKQFRDEGRSGNVESPSIATNQEGSSP) are disordered. Residues 197 to 210 (NVESPSIATNQEGS) are compositionally biased toward polar residues.

This is an uncharacterized protein from Encephalitozoon cuniculi (strain GB-M1) (Microsporidian parasite).